Reading from the N-terminus, the 328-residue chain is Flap endonuclease 1 (328 aa).

Residues 1–98 are N-domain; sequence MGVKLRDVVS…ETVSRRADIR (98 aa). Positions 27, 80, 152, 154, 173, 175, and 226 each coordinate Mg(2+). The I-domain stretch occupies residues 116-247; sequence RAKKYAVRSS…RGLKLIREKG (132 aa). An interaction with PCNA region spans residues 320–328; sequence TQKSLEDWF.

It belongs to the XPG/RAD2 endonuclease family. FEN1 subfamily. As to quaternary structure, interacts with PCNA. PCNA stimulates the nuclease activity without altering cleavage specificity. The cofactor is Mg(2+).

In terms of biological role, structure-specific nuclease with 5'-flap endonuclease and 5'-3' exonuclease activities involved in DNA replication and repair. During DNA replication, cleaves the 5'-overhanging flap structure that is generated by displacement synthesis when DNA polymerase encounters the 5'-end of a downstream Okazaki fragment. Binds the unpaired 3'-DNA end and kinks the DNA to facilitate 5' cleavage specificity. Cleaves one nucleotide into the double-stranded DNA from the junction in flap DNA, leaving a nick for ligation. Also involved in the base excision repair (BER) pathway. Acts as a genome stabilization factor that prevents flaps from equilibrating into structures that lead to duplications and deletions. Also possesses 5'-3' exonuclease activity on nicked or gapped double-stranded DNA. This chain is Flap endonuclease 1, found in Methanothermobacter thermautotrophicus (strain ATCC 29096 / DSM 1053 / JCM 10044 / NBRC 100330 / Delta H) (Methanobacterium thermoautotrophicum).